Reading from the N-terminus, the 583-residue chain is Ribosomal lysine N-methyltransferase 1 (583 aa).

The SET domain occupies 22–274 (EELKFLYTDL…QSRELSNNYG (253 aa)). Tyr273 contacts S-adenosyl-L-methionine. 2 coiled-coil regions span residues 378–407 (KAEE…KLNS) and 433–459 (KGQK…ENKH).

This sequence belongs to the class V-like SAM-binding methyltransferase superfamily. RKM1 family.

Its subcellular location is the cytoplasm. It localises to the nucleus. Its function is as follows. S-adenosyl-L-methionine-dependent protein-lysine N-methyltransferase that monomethylates ribosomal protein S18 (RPS18A and RPS18B) at 'Lys-48' and dimethylates ribosomal protein L23 (RPL23A and RPL23B) at 'Lys-106' and 'Lys-110'. The chain is Ribosomal lysine N-methyltransferase 1 from Saccharomyces cerevisiae (strain ATCC 204508 / S288c) (Baker's yeast).